The sequence spans 338 residues: Glyceraldehyde-3-phosphate dehydrogenase (338 aa).

Residues 12–13 (RI), D34, and R80 contribute to the NAD(+) site. D-glyceraldehyde 3-phosphate is bound by residues 151–153 (SCT), T182, 211–212 (TG), and R234. Catalysis depends on C152, which acts as the Nucleophile. N316 provides a ligand contact to NAD(+).

This sequence belongs to the glyceraldehyde-3-phosphate dehydrogenase family. Homotetramer.

It localises to the cytoplasm. The enzyme catalyses D-glyceraldehyde 3-phosphate + phosphate + NAD(+) = (2R)-3-phospho-glyceroyl phosphate + NADH + H(+). The protein operates within carbohydrate degradation; glycolysis; pyruvate from D-glyceraldehyde 3-phosphate: step 1/5. The polypeptide is Glyceraldehyde-3-phosphate dehydrogenase (GPD) (Paracoccidioides lutzii (strain ATCC MYA-826 / Pb01) (Paracoccidioides brasiliensis)).